The sequence spans 236 residues: Ubiquinone biosynthesis O-methyltransferase (236 aa).

The S-adenosyl-L-methionine site is built by R39, G59, D80, and M124.

The protein belongs to the methyltransferase superfamily. UbiG/COQ3 family.

The catalysed reaction is a 3-demethylubiquinol + S-adenosyl-L-methionine = a ubiquinol + S-adenosyl-L-homocysteine + H(+). The enzyme catalyses a 3-(all-trans-polyprenyl)benzene-1,2-diol + S-adenosyl-L-methionine = a 2-methoxy-6-(all-trans-polyprenyl)phenol + S-adenosyl-L-homocysteine + H(+). It functions in the pathway cofactor biosynthesis; ubiquinone biosynthesis. Functionally, O-methyltransferase that catalyzes the 2 O-methylation steps in the ubiquinone biosynthetic pathway. The sequence is that of Ubiquinone biosynthesis O-methyltransferase from Shewanella baltica (strain OS223).